Consider the following 295-residue polypeptide: NAD kinase (295 aa).

The Proton acceptor role is filled by Asp-72. Residues 72-73 (DG), 146-147 (ND), Arg-157, Lys-174, Asp-176, 187-192 (TAYALS), and Gln-247 each bind NAD(+).

It belongs to the NAD kinase family. Requires a divalent metal cation as cofactor.

It localises to the cytoplasm. It carries out the reaction NAD(+) + ATP = ADP + NADP(+) + H(+). Functionally, involved in the regulation of the intracellular balance of NAD and NADP, and is a key enzyme in the biosynthesis of NADP. Catalyzes specifically the phosphorylation on 2'-hydroxyl of the adenosine moiety of NAD to yield NADP. The polypeptide is NAD kinase (Ectopseudomonas mendocina (strain ymp) (Pseudomonas mendocina)).